The chain runs to 824 residues: AMP deaminase 2 (824 aa).

A disordered region spans residues 1-43; the sequence is MASYPGPGKSKAKYPFKKRASLQASAAAPEARSGLGASPLQSA. Positions 10–20 are enriched in basic residues; that stretch reads SKAKYPFKKRA. Position 21 is a phosphoserine (serine 21). Over residues 21 to 33 the composition is skewed to low complexity; the sequence is SLQASAAAPEARS. Arginine 44 carries the omega-N-methylarginine modification. A phosphoserine mark is found at serine 45, serine 63, and serine 79. The residue at position 90 (tyrosine 90) is a Phosphotyrosine. Phosphoserine occurs at positions 96 and 113. A Phosphothreonine modification is found at threonine 133. A phosphoserine mark is found at serine 135 and serine 137. The Zn(2+) site is built by histidine 364 and histidine 366. Residues histidine 366 and 435-440 contribute to the substrate site; that span reads KFNAKY. Histidine 633 provides a ligand contact to Zn(2+). Glutamate 636 lines the substrate pocket. Histidine 655 functions as the Proton acceptor in the catalytic mechanism. Zn(2+) is bound at residue aspartate 710. 711–714 lines the substrate pocket; sequence DPLQ.

This sequence belongs to the metallo-dependent hydrolases superfamily. Adenosine and AMP deaminases family. As to quaternary structure, homotetramer. Zn(2+) serves as cofactor.

The catalysed reaction is AMP + H2O + H(+) = IMP + NH4(+). It participates in purine metabolism; IMP biosynthesis via salvage pathway; IMP from AMP: step 1/1. Functionally, AMP deaminase plays a critical role in energy metabolism. Catalyzes the deamination of AMP to IMP and plays an important role in the purine nucleotide cycle. The protein is AMP deaminase 2 of Rattus norvegicus (Rat).